A 531-amino-acid polypeptide reads, in one-letter code: L-aspartate oxidase (531 aa).

FAD contacts are provided by residues 11 to 14 (SGAA), Lys33, 40 to 47 (NSVYAQGG), 151 to 152 (TA), and Asp205. The active-site Proton donor/acceptor is Arg272. FAD contacts are provided by residues Glu353 and 369 to 370 (SL).

It belongs to the FAD-dependent oxidoreductase 2 family. NadB subfamily. Monomer. Homodimer. It depends on FAD as a cofactor.

The protein resides in the cytoplasm. The catalysed reaction is L-aspartate + O2 = iminosuccinate + H2O2. It catalyses the reaction fumarate + L-aspartate = iminosuccinate + succinate. The protein operates within cofactor biosynthesis; NAD(+) biosynthesis; iminoaspartate from L-aspartate (oxidase route): step 1/1. Catalyzes the oxidation of L-aspartate to iminoaspartate, the first step in the de novo biosynthesis of NAD(+). Can use either oxygen or fumarate as electron acceptors, which allows the enzyme to be functional under aerobic and anaerobic conditions. The protein is L-aspartate oxidase of Bacillus subtilis (strain 168).